Consider the following 318-residue polypeptide: Ferredoxin--NADP reductase (318 aa).

Residues D33, Q41, Y46, V84, F115, D276, and T316 each contribute to the FAD site.

Belongs to the ferredoxin--NADP reductase type 2 family. In terms of assembly, homodimer. FAD is required as a cofactor.

It carries out the reaction 2 reduced [2Fe-2S]-[ferredoxin] + NADP(+) + H(+) = 2 oxidized [2Fe-2S]-[ferredoxin] + NADPH. This Lactobacillus johnsonii (strain CNCM I-12250 / La1 / NCC 533) protein is Ferredoxin--NADP reductase.